A 780-amino-acid polypeptide reads, in one-letter code: MSDWNEIQRLAADFQRIQLTASAHQLSERNCIEIITKLIAMNKVQVMYTIDGKEYLTPQQLEREIRDELFVHSGRINLVELQQVINVDLTHIDSKVKEMLRGDRSLYLIQGDLIDRDYIDRLAEEINDILQESGQISVSELGKTFNLPTDFLQTNIEKRMGIYIHGQVNPLERGTIYTEAYVARHAAKIRGVFSAITRPTSVSSIIYQYSFPEALLHDILRKLLDEKRLAGSVQGHQSKAIYTPNIYSRTQSNWVLSFFRQNDYIEYDSLTRLDITDPKNYLKKCLNKNVIFLESCVSGQNILGQVQAAIEDVVATPSWVDIMTLLPSPFTTGDASVLLQKHCLKSNKNNTSVQCLCDKFVVSNKFIQNCLQLFDDHMKTKAEKVYFHLLFIDAGKVAAKFASTSSTNPNHSTLTKHDDSNVTGGKKKKGDDSTSSKRKGKGKDRSTPDDLESTRSHIKQNKQDLEFMAIPEIIEVLQREHSNCEDQFLEEIASQLFSPLKRKYQEVAKSVFLASTSSVTSEKRKLHSDAQDKINGLLTNAKLFGKGLQHFSGDAHTTLGKHLLHTLCTEITNIVFSLLISEHIMVDSDPNSLNPETRSSALEKFPNNVKKAASALEKSLSGKDVEQFFDALDVVLGPSICQIMIKKLDKKKERQIIFNHRQSLIEQLNKESKPAMCLHLCTLLLFQRHTQCMIHAPGRCIPQIISFLKQHLTDEQYKTIYEYQQLIIQSIQQSSDKQKPEMSEEPKDSDNSNDNQNIDLQLQEKMTTIKAIALENKKQS.

The span at 403–413 (STSSTNPNHST) shows a compositional bias: polar residues. 2 disordered regions span residues 403–458 (STSS…RSHI) and 734–760 (SSDK…NIDL). Basic and acidic residues-rich tracts occupy residues 443–458 (KDRS…RSHI) and 736–750 (DKQK…KDSD).

It belongs to the UFL1 family.

E3 UFM1-protein ligase that mediates ufmylation of target proteins. The chain is E3 UFM1-protein ligase 1 homolog from Trichoplax adhaerens (Trichoplax reptans).